A 194-amino-acid polypeptide reads, in one-letter code: Endo-1,4-beta-xylanase (194 aa).

Gly-1 carries the post-translational modification N-acetylglycine. The region spanning 1–191 is the GH11 domain; that stretch reads GTTPNSEGWH…SSGYARITVA (191 aa). Catalysis depends on Glu-86, which acts as the Nucleophile. Cysteines 110 and 154 form a disulfide. Glu-178 (proton donor) is an active-site residue.

This sequence belongs to the glycosyl hydrolase 11 (cellulase G) family.

The catalysed reaction is Endohydrolysis of (1-&gt;4)-beta-D-xylosidic linkages in xylans.. It functions in the pathway glycan degradation; xylan degradation. This is Endo-1,4-beta-xylanase from Byssochlamys spectabilis (Paecilomyces variotii).